The following is a 358-amino-acid chain: Peptide chain release factor 1 (358 aa).

Residue glutamine 237 is modified to N5-methylglutamine.

This sequence belongs to the prokaryotic/mitochondrial release factor family. Post-translationally, methylated by PrmC. Methylation increases the termination efficiency of RF1.

Its subcellular location is the cytoplasm. Its function is as follows. Peptide chain release factor 1 directs the termination of translation in response to the peptide chain termination codons UAG and UAA. This chain is Peptide chain release factor 1, found in Streptomyces griseus subsp. griseus (strain JCM 4626 / CBS 651.72 / NBRC 13350 / KCC S-0626 / ISP 5235).